The sequence spans 404 residues: MATLILSFLLLLLATKLPESLAGHCTTTTATKSFEKCISLPTQQASIAWTYHPHNATLDLCFFGTFISPSGWVGWGINPDSPAQMTGSRVLIAFPDPNSGQLILLPYVLDSSVKLQKGPLLSRPLDLVRLSSSSASLYGGKMATIRNGASVQIYASVKLSSNNTKIHHVWNRGLYVQGYSPTIHPTTSTDLSSFSTFDVTSGFATVNQNSGSRALKVTHGVVNAISWGFLLPAGAVTARYLRQMQSIGPTWFYIHAAIQLTGFLLGTIGFSIGIVLGHNSPGVTYGLHRSLGIATFTAAALQTLALLFRPKTTNKFRRYWKSYHHFVGYACVVMGVVNVFQGFEVLREGRSYAKLGYCLCLSTLVGVCVAMEVNSWVVFCRKAKEEKMKRDGLTGVDRCSGSHS.

Positions Met1–Ala22 are cleaved as a signal peptide. In terms of domain architecture, DOMON spans Gln43–Gly173. Residues Ser180 to Cys380 enclose the Cytochrome b561 domain. The helical transmembrane segment at Val217–Thr237 threads the bilayer. Heme b contacts are provided by His219 and His255. A helical membrane pass occupies residues Ala256–Leu276. A heme b-binding site is contributed by His288. The helical transmembrane segment at Ser290–Pro310 threads the bilayer. A heme b-binding site is contributed by His324. 2 consecutive transmembrane segments (helical) span residues Phe326 to Leu346 and Leu359 to Phe379.

Heme b serves as cofactor.

It is found in the membrane. Its function is as follows. May act as a catecholamine-responsive trans-membrane electron transporter. This chain is Cytochrome b561 and DOMON domain-containing protein At2g04850, found in Arabidopsis thaliana (Mouse-ear cress).